The chain runs to 517 residues: Acetylcholine receptor subunit delta (517 aa).

The N-terminal stretch at 1–21 (MEGPVLTLGLLAALAVCGSWG) is a signal peptide. Over 22-245 (LNEEERLIRH…ITFYLIIRRK (224 aa)) the chain is Extracellular. Asn-97 and Asn-164 each carry an N-linked (GlcNAc...) asparagine glycan. Residues Cys-151 and Cys-165 are joined by a disulfide bond. The next 3 helical transmembrane spans lie at 246 to 270 (PLFY…VFYL), 278 to 299 (TSVA…SKRL), and 312 to 333 (FLLF…VLNI). The Cytoplasmic portion of the chain corresponds to 334 to 471 (HFRTPSTHVL…WNRVARTVDR (138 aa)). A Phosphotyrosine; by Tyr-kinases modification is found at Tyr-390. The helical transmembrane segment at 472–490 (LCLFVVTPVMVVGTAWIFL) threads the bilayer.

The protein belongs to the ligand-gated ion channel (TC 1.A.9) family. Acetylcholine receptor (TC 1.A.9.1) subfamily. Delta/CHRND sub-subfamily. As to quaternary structure, pentamer of two alpha chains, and one each of the beta, delta, and gamma (in immature muscle) or epsilon (in mature muscle) chains. The muscle heteropentamer composed of alpha-1, beta-1, delta, epsilon subunits interacts with the alpha-conotoxin ImII.

It is found in the postsynaptic cell membrane. The protein resides in the cell membrane. It catalyses the reaction K(+)(in) = K(+)(out). The enzyme catalyses Na(+)(in) = Na(+)(out). Functionally, after binding acetylcholine, the AChR responds by an extensive change in conformation that affects all subunits and leads to opening of an ion-conducting channel across the plasma membrane. This chain is Acetylcholine receptor subunit delta, found in Homo sapiens (Human).